A 712-amino-acid polypeptide reads, in one-letter code: Effector protein HopM1 (712 aa).

The disordered stretch occupies residues 22 to 58 (DTVPAQTAHPNAVTAGMNPPLTPDQSGSHATESSSAG). Over residues 44 to 57 (PDQSGSHATESSSA) the composition is skewed to polar residues.

As to quaternary structure, interacts with the chaperone ShcM. Interacts with host plant BIG5/ATMIN7.

Its subcellular location is the secreted. It localises to the host membrane. Involved in the suppression of basal resistance and promotion of disease symptoms in plants. Mediates the ubiquitination and degradation, via the host proteasome, of a low-abundance immunity-associated protein in Arabidopsis thaliana. May be involved in the inhibition of a host vesicle trafficking pathway. The polypeptide is Effector protein HopM1 (hopM1) (Pseudomonas syringae pv. tomato (strain ATCC BAA-871 / DC3000)).